Consider the following 348-residue polypeptide: tRNA pseudouridine synthase D (348 aa).

Residue F27 participates in substrate binding. Catalysis depends on D80, which acts as the Nucleophile. N129 is a binding site for substrate. In terms of domain architecture, TRUD spans 155–303 (GVPNYFGSQR…VESARRAVLL (149 aa)). F329 contributes to the substrate binding site.

This sequence belongs to the pseudouridine synthase TruD family.

It catalyses the reaction uridine(13) in tRNA = pseudouridine(13) in tRNA. In terms of biological role, responsible for synthesis of pseudouridine from uracil-13 in transfer RNAs. The sequence is that of tRNA pseudouridine synthase D from Pectobacterium carotovorum subsp. carotovorum (strain PC1).